The sequence spans 272 residues: Shikimate dehydrogenase (NADP(+)) (272 aa).

Residues 14–16 and T61 each bind shikimate; that span reads SKS. K65 (proton acceptor) is an active-site residue. E77 is an NADP(+) binding site. Residues N86 and D102 each coordinate shikimate. NADP(+) is bound by residues 126 to 130, 149 to 154, and M213; these read GAGGA and NRTVSR. Y215 is a binding site for shikimate. G237 contributes to the NADP(+) binding site.

Belongs to the shikimate dehydrogenase family. In terms of assembly, homodimer.

The catalysed reaction is shikimate + NADP(+) = 3-dehydroshikimate + NADPH + H(+). The protein operates within metabolic intermediate biosynthesis; chorismate biosynthesis; chorismate from D-erythrose 4-phosphate and phosphoenolpyruvate: step 4/7. Its function is as follows. Involved in the biosynthesis of the chorismate, which leads to the biosynthesis of aromatic amino acids. Catalyzes the reversible NADPH linked reduction of 3-dehydroshikimate (DHSA) to yield shikimate (SA). This is Shikimate dehydrogenase (NADP(+)) from Escherichia coli O6:H1 (strain CFT073 / ATCC 700928 / UPEC).